A 482-amino-acid chain; its full sequence is Glycogen synthase (482 aa).

Lys20 is an ADP-alpha-D-glucose binding site.

Belongs to the glycosyltransferase 1 family. Bacterial/plant glycogen synthase subfamily.

The catalysed reaction is [(1-&gt;4)-alpha-D-glucosyl](n) + ADP-alpha-D-glucose = [(1-&gt;4)-alpha-D-glucosyl](n+1) + ADP + H(+). It functions in the pathway glycan biosynthesis; glycogen biosynthesis. Synthesizes alpha-1,4-glucan chains using ADP-glucose. This Aliivibrio salmonicida (strain LFI1238) (Vibrio salmonicida (strain LFI1238)) protein is Glycogen synthase.